Consider the following 745-residue polypeptide: 5-methyltetrahydropteroyltriglutamate--homocysteine methyltransferase (745 aa).

5-methyltetrahydropteroyltri-L-glutamate contacts are provided by residues 17–20 (RELK) and Lys-111. Residues 421–423 (IGS) and Glu-474 each bind L-homocysteine. Residues 421-423 (IGS) and Glu-474 contribute to the L-methionine site. 5-methyltetrahydropteroyltri-L-glutamate is bound by residues 505–506 (RC) and Trp-551. Residue Asp-589 coordinates L-homocysteine. Asp-589 contributes to the L-methionine binding site. A 5-methyltetrahydropteroyltri-L-glutamate-binding site is contributed by Glu-595. Zn(2+) is bound by residues His-631, Cys-633, and Glu-655. The active-site Proton donor is the His-684. Zn(2+) is bound at residue Cys-716.

It belongs to the vitamin-B12 independent methionine synthase family. Zn(2+) is required as a cofactor.

It catalyses the reaction 5-methyltetrahydropteroyltri-L-glutamate + L-homocysteine = tetrahydropteroyltri-L-glutamate + L-methionine. It functions in the pathway amino-acid biosynthesis; L-methionine biosynthesis via de novo pathway; L-methionine from L-homocysteine (MetE route): step 1/1. Functionally, catalyzes the transfer of a methyl group from 5-methyltetrahydrofolate to homocysteine resulting in methionine formation. In Thermodesulfovibrio yellowstonii (strain ATCC 51303 / DSM 11347 / YP87), this protein is 5-methyltetrahydropteroyltriglutamate--homocysteine methyltransferase.